A 266-amino-acid chain; its full sequence is Chymotrypsin-like elastase family member 1 (266 aa).

Positions 1 to 16 (MLRFLVFASLVLCGHS) are cleaved as a signal peptide. The propeptide at 17–26 (TEDVPETDAR) is activation peptide. The Peptidase S1 domain maps to 27–264 (VVGGAEARRN…YISWMNNVIA (238 aa)). A disulfide bridge links Cys56 with Cys72. His71 (charge relay system) is an active-site residue. Ca(2+)-binding residues include Glu85, Asn87, Gln90, and Glu95. N-linked (GlcNAc...) asparagine glycosylation occurs at Asn87. Asp119 acts as the Charge relay system in catalysis. 3 cysteine pairs are disulfide-bonded: Cys153/Cys220, Cys184/Cys200, and Cys210/Cys240. Ser214 serves as the catalytic Charge relay system.

This sequence belongs to the peptidase S1 family. Elastase subfamily. Ca(2+) is required as a cofactor.

The protein localises to the secreted. The enzyme catalyses Hydrolysis of proteins, including elastin. Preferential cleavage: Ala-|-Xaa.. Functionally, serine proteases that hydrolyze many proteins in addition to elastin. The protein is Chymotrypsin-like elastase family member 1 (Cela1) of Mus musculus (Mouse).